Reading from the N-terminus, the 530-residue chain is TNF receptor-associated factor 6 (530 aa).

Residues 1–362 (MSLLNCENSC…EAQQCNGIYI (362 aa)) are interaction with TAX1BP1. The RING-type zinc finger occupies 70-109 (CPICLMALREAVQTPCGHRFCKACIIKSIRDAGHKCPVDN). Lys-124 is covalently cross-linked (Glycyl lysine isopeptide (Lys-Gly) (interchain with G-Cter in SUMO); alternate). Lys-124 is covalently cross-linked (Glycyl lysine isopeptide (Lys-Gly) (interchain with G-Cter in ubiquitin); alternate). A Glycyl lysine isopeptide (Lys-Gly) (interchain with G-Cter in SUMO) cross-link involves residue Lys-142. TRAF-type zinc fingers lie at residues 150-202 (DHQV…EEKE) and 203-259 (IHDQ…NHLA). Residues 299 to 356 (EDPNYEETIKQLESRLVRQDHQIRELTAKMETQSMYVGELKRTIRTLEDKVAEMEAQQ) adopt a coiled-coil conformation. Lys-327 is covalently cross-linked (Glycyl lysine isopeptide (Lys-Gly) (interchain with G-Cter in ubiquitin)). Residues 358–507 (NGIYIWKIGN…DDTLLVRCEV (150 aa)) enclose the MATH domain. Residues 363–530 (WKIGNFGMHL…FQPRSTDAGV (168 aa)) form an interaction with TANK region. Residue Lys-461 forms a Glycyl lysine isopeptide (Lys-Gly) (interchain with G-Cter in SUMO) linkage.

The protein belongs to the TNF receptor-associated factor family. A subfamily. In terms of assembly, homotrimer. Homooligomer. N-terminal region is dimeric while C-terminal region is trimeric; maybe providing a mode of oligomerization. Upon IL1B treatment, forms a complex with PELI1, IRAK1, IRAK4 and MYD88; this complex recruits MAP3K7/TAK1, TAB1 and TAB2 to mediate NF-kappa-B activation. Direct binding of SMAD6 to PELI1 prevents the complex formation and hence negatively regulates IL1R-TLR signaling and eventually NF-kappa-B-mediated gene expression. Binds to TNFRSF5/CD40 and TNFRSF11A/RANK. Associates with NGFR, TNFRSF17, IRAK2, IRAK3, PELI2, PELI3, RIPK2, MAP3K1, MAP3K5, MAP3K14, CSK, TRAF, TRAF-interacting protein TRIP and TNF receptor associated protein TDP2. Binds UBE2V1. Interacts with MAVS/IPS1. Interacts with TAX1BP1; this interaction mediates deubiquitination of TRAF6 and inhibition of NF-kappa-B activation. Interacts with IL17R. Interacts with SQSTM1 bridging NTRK1 and NGFR. Forms a ternary complex with SQSTM1 and PRKCZ. Interacts with IL1RL1. Interacts with AJUBA. Interacts with TRAFD1. Interacts with TICAM2. Interacts with ZFAND5. Interacts with ARRB1 and ARRB2. Interacts with MAP3K7 and TAB1/MAP3K7IP1; during IL-1 signaling. Interacts with UBE2N. Interacts with TGFBR1, HDAC1 and RANGAP1. Interacts with AKT1, AKT2 and AKT3. Interacts (via TRAF domains) with NUMBL (via C-terminal). Interacts (via TRAF domains) with DYNC2I2 (via WD domains). Interacts with RBCK1. Interacts with LIMD1 (via LIM domains). Interacts with RSAD2/viperin. Interacts with IFIT3 (via N-terminus). Interacts (via C-terminus) with EIF2AK2/PKR (via the kinase catalytic domain). Interacts with CARD14. Interacts with CD40 and MAP3K8; the interaction is required for ERK activation. Interacts with TICAM1 and this interaction is enhanced in the presence of WDFY1. Interacts with TANK; this interaction increases in response to DNA damage. Interacts with USP10; this interaction increases in response to DNA damage. Interacts with ZC3H12A; this interaction increases in response to DNA damage and is stimulated by TANK. Interacts with WDFY3. Interacts with TRIM13. Interacts with GPS2. Interacts (via C-terminus) with SASH1. Interacts with LRRC19. Interacts with IL17RA and TRAF3IP2. Interacts with TOMM70. Interacts with AMBRA1; interaction is required to mediate 'Lys-63'-linked ubiquitination of ULK1. Interacts with CRBN; this interaction inhibits TLR4-mediated signaling by preventing TRAF6-mediated ubiquitination of ECSIT. As to quaternary structure, (Microbial infection) Interacts (via N-terminal RING domain) with Toxoplasma gondii GRA7; the interaction plays a role in GRA7-induced pro-inflammatory cytokine production in mouse macrophages. Sumoylated on Lys-124, Lys-142 and Lys-461 with SUMO1. Post-translationally, polyubiquitinated on Lys-124 by TRAF3IP2; after cell stimulation with IL17A. Polyubiquitinated; after cell stimulation with IL1B or TGFB. This ligand-induced cell stimulation leads to dimerization/oligomerization of TRAF6 molecules, followed by auto-ubiquitination which involves UBE2N and UBE2V1 and leads to TRAF6 activation. This 'Lys-63' site-specific poly-ubiquitination appears to be associated with the activation of signaling molecules. Endogenous autoubiquitination occurs only for the cytoplasmic form. Deubiquitinated by USP10 in a TANK-dependent manner, leading to the negative regulation of NF-kappa-B signaling upon DNA damage. LRRC19 induces 'Lys-63' ubiquitination. Ubiquitinated at Lys-327 by the SCF(FBXL2) complex, leading to its degradation by the proteasome. Highly expressed in brain, lung, liver, skeletal muscle, and kidney; lower expression in heart, spleen, and testis.

The protein localises to the cytoplasm. The protein resides in the cell cortex. Its subcellular location is the nucleus. It is found in the lipid droplet. The enzyme catalyses S-ubiquitinyl-[E2 ubiquitin-conjugating enzyme]-L-cysteine + [acceptor protein]-L-lysine = [E2 ubiquitin-conjugating enzyme]-L-cysteine + N(6)-ubiquitinyl-[acceptor protein]-L-lysine.. It functions in the pathway protein modification; protein ubiquitination. Functionally, E3 ubiquitin ligase that, together with UBE2N and UBE2V1, mediates the synthesis of 'Lys-63'-linked-polyubiquitin chains conjugated to proteins, such as ECSIT, IKBKG, IRAK1, AKT1 and AKT2. Also mediates ubiquitination of free/unanchored polyubiquitin chain that leads to MAP3K7 activation. Leads to the activation of NF-kappa-B and JUN. Seems to also play a role in dendritic cells (DCs) maturation and/or activation. Represses c-Myb-mediated transactivation, in B-lymphocytes. Adapter protein that seems to play a role in signal transduction initiated via TNF receptor, IL-1 receptor and IL-17 receptor. Regulates osteoclast differentiation by mediating the activation of adapter protein complex 1 (AP-1) and NF-kappa-B, in response to RANK-L stimulation. Together with MAP3K8, mediates CD40 signals that activate ERK in B-cells and macrophages, and thus may play a role in the regulation of immunoglobulin production. Acts as a regulator of the JNK and NF-kappa-B signaling pathways by initiating assembly of heterotypic 'Lys-63'-/'Lys-48'-linked branched ubiquitin chains that are then recognized by TAB2: TRAF6 catalyzes initial 'Lys-63'-linked-polyubiquitin chains that are then branched via 'Lys-48'-linked polyubiquitin by HUWE1. 'Lys-63'-/'Lys-48'-linked branched ubiquitin chains protect 'Lys-63'-linkages from CYLD deubiquitination. Also participates in the TCR signaling by ubiquitinating LAT. The chain is TNF receptor-associated factor 6 (Traf6) from Mus musculus (Mouse).